We begin with the raw amino-acid sequence, 308 residues long: Tyrosine recombinase XerC (308 aa).

The region spanning 20–101 (SKLHTLIDDF…SVKAFSSWAQ (82 aa)) is the Core-binding (CB) domain. Residues 122–302 (DLPKILGEQQ…SNKRLLEAFN (181 aa)) form the Tyr recombinase domain. Active-site residues include R163, K187, H254, R257, and H280. The active-site O-(3'-phospho-DNA)-tyrosine intermediate is Y289.

This sequence belongs to the 'phage' integrase family. XerC subfamily. Forms a cyclic heterotetrameric complex composed of two molecules of XerC and two molecules of XerD.

It is found in the cytoplasm. Functionally, site-specific tyrosine recombinase, which acts by catalyzing the cutting and rejoining of the recombining DNA molecules. The XerC-XerD complex is essential to convert dimers of the bacterial chromosome into monomers to permit their segregation at cell division. It also contributes to the segregational stability of plasmids. This Corynebacterium glutamicum (strain ATCC 13032 / DSM 20300 / JCM 1318 / BCRC 11384 / CCUG 27702 / LMG 3730 / NBRC 12168 / NCIMB 10025 / NRRL B-2784 / 534) protein is Tyrosine recombinase XerC.